A 143-amino-acid chain; its full sequence is MAIERTFSIIKPDAVAKNHIGAIYNRFESAGLKIIAAKMVHLTKEQAEGFYAEHSERPFFGALVSFMTSGPIMVQVLEGENAVLANREIMGATNPAQAARGTLRADYAASIDENAVHGSDALASAEREIAYFFAADELCPRTR.

ATP contacts are provided by Lys-11, Phe-59, Arg-87, Thr-93, Arg-104, and Asn-114. His-117 functions as the Pros-phosphohistidine intermediate in the catalytic mechanism.

This sequence belongs to the NDK family. In terms of assembly, homotetramer. Mg(2+) serves as cofactor.

The protein resides in the cytoplasm. The catalysed reaction is a 2'-deoxyribonucleoside 5'-diphosphate + ATP = a 2'-deoxyribonucleoside 5'-triphosphate + ADP. The enzyme catalyses a ribonucleoside 5'-diphosphate + ATP = a ribonucleoside 5'-triphosphate + ADP. Major role in the synthesis of nucleoside triphosphates other than ATP. The ATP gamma phosphate is transferred to the NDP beta phosphate via a ping-pong mechanism, using a phosphorylated active-site intermediate. This Shewanella amazonensis (strain ATCC BAA-1098 / SB2B) protein is Nucleoside diphosphate kinase.